A 183-amino-acid chain; its full sequence is UPF0200 protein MmarC6_1392 (183 aa).

8–15 (GMPGSGKS) serves as a coordination point for ATP.

This sequence belongs to the UPF0200 family.

In Methanococcus maripaludis (strain C6 / ATCC BAA-1332), this protein is UPF0200 protein MmarC6_1392.